The following is a 485-amino-acid chain: Mitochondria-eating protein (485 aa).

Residues 112-210 (TSHERELNEV…SILSSESSIL (99 aa)) adopt a coiled-coil conformation. 2 stretches are compositionally biased toward low complexity: residues 214 to 241 (LSRSRSPSPIRHSSRSSSPFARSESPTS) and 471 to 485 (RSRSPSPRRSGTPRF). 2 disordered regions span residues 214-244 (LSRSRSPSPIRHSSRSSSPFARSESPTSAKL) and 451-485 (RSRSASPLRSHSDSPGHNLTRSRSPSPRRSGTPRF).

The protein belongs to the MIEAP family.

The protein resides in the cytoplasm. The protein localises to the mitochondrion outer membrane. It localises to the mitochondrion matrix. Functionally, key regulator of mitochondrial quality that mediates the repairing or degradation of unhealthy mitochondria in response to mitochondrial damage. Mediator of mitochondrial protein catabolic process (also named MALM) by mediating the degradation of damaged proteins inside mitochondria by promoting the accumulation in the mitochondrial matrix of hydrolases that are characteristic of the lysosomal lumen. Also involved in mitochondrion degradation of damaged mitochondria by promoting the formation of vacuole-like structures (named MIV), which engulf and degrade unhealthy mitochondria by accumulating lysosomes. Binds cardiolipin. May form molecular condensates (non-membrane-bounded organelles) within mitochondria that compartmentalize and promote cardiolipin metabolism. In Xenopus laevis (African clawed frog), this protein is Mitochondria-eating protein (spata18).